The sequence spans 386 residues: bHLH transcription factor RHL1 (386 aa).

The tract at residues 119–186 (FTGSLNGTQP…RRGQATDPHS (68 aa)) is disordered. Residues 127-137 (QPQQHFQHPPQ) show a composition bias toward low complexity. Over residues 138–151 (GNSNQIQGQNFGAT) the composition is skewed to polar residues. A basic motif; degenerate region spans residues 180–193 (QATDPHSIAERLRR). A bHLH domain is found at 180–229 (QATDPHSIAERLRRERIAERMKALQELVPNANKTDKASMLDEIIDYVKFL). Residues 194-229 (ERIAERMKALQELVPNANKTDKASMLDEIIDYVKFL) form a helix-loop-helix motif region.

As to expression, expressed in root epidermal cells.

The protein resides in the nucleus. In terms of biological role, transcription factor that regulates the development of root hairs. The protein is bHLH transcription factor RHL1 of Lotus japonicus (Lotus corniculatus var. japonicus).